A 329-amino-acid chain; its full sequence is Diaminopimelate epimerase (329 aa).

Substrate contacts are provided by N14 and N73. Catalysis depends on C82, which acts as the Proton donor. Substrate-binding positions include 83 to 84, N170, N206, and 224 to 225; these read GN and ER. The active-site Proton acceptor is the C233. 234 to 235 is a binding site for substrate; that stretch reads GT.

Belongs to the diaminopimelate epimerase family. As to quaternary structure, homodimer.

It is found in the cytoplasm. The catalysed reaction is (2S,6S)-2,6-diaminopimelate = meso-2,6-diaminopimelate. The protein operates within amino-acid biosynthesis; L-lysine biosynthesis via DAP pathway; DL-2,6-diaminopimelate from LL-2,6-diaminopimelate: step 1/1. Functionally, catalyzes the stereoinversion of LL-2,6-diaminopimelate (L,L-DAP) to meso-diaminopimelate (meso-DAP), a precursor of L-lysine and an essential component of the bacterial peptidoglycan. This Listeria monocytogenes serotype 4b (strain F2365) protein is Diaminopimelate epimerase.